Consider the following 119-residue polypeptide: METLVQAYLDIQGKIAEFRREIKALRVEEKAITANLFEAMGEAGVESIRISEDRYLVAEEKPKRTRSKQQFYQAAEGEGFTQEDVDRLMSLSRGAVTGSSSNVKIRKSAPARNEEDDDG.

The stretch at 6-36 forms a coiled coil; the sequence is QAYLDIQGKIAEFRREIKALRVEEKAITANL. The tract at residues 95–119 is disordered; sequence AVTGSSSNVKIRKSAPARNEEDDDG.

This is an uncharacterized protein from Frog virus 3 (isolate Goorha) (FV-3).